Here is a 146-residue protein sequence, read N- to C-terminus: uncharacterized protein (146 aa).

In terms of domain architecture, Glutaredoxin spans 34–135 (EDKIVNDVMT…PLLEKAHALF (102 aa)). Residue Cys-54 participates in [2Fe-2S] cluster binding.

The protein belongs to the glutaredoxin family. Monothiol subfamily.

This is an uncharacterized protein from Caenorhabditis elegans.